The chain runs to 260 residues: DNA repair protein RecO (260 aa).

Belongs to the RecO family.

Functionally, involved in DNA repair and RecF pathway recombination. The polypeptide is DNA repair protein RecO (Paracidovorax citrulli (strain AAC00-1) (Acidovorax citrulli)).